The sequence spans 428 residues: Serine hydroxymethyltransferase (428 aa).

(6S)-5,6,7,8-tetrahydrofolate is bound by residues L127 and 131–133; that span reads GHL. K236 is modified (N6-(pyridoxal phosphate)lysine).

Belongs to the SHMT family. Homodimer. Requires pyridoxal 5'-phosphate as cofactor.

The protein localises to the cytoplasm. The enzyme catalyses (6R)-5,10-methylene-5,6,7,8-tetrahydrofolate + glycine + H2O = (6S)-5,6,7,8-tetrahydrofolate + L-serine. It functions in the pathway one-carbon metabolism; tetrahydrofolate interconversion. Its pathway is amino-acid biosynthesis; glycine biosynthesis; glycine from L-serine: step 1/1. In terms of biological role, catalyzes the reversible interconversion of serine and glycine with tetrahydrofolate (THF) serving as the one-carbon carrier. This reaction serves as the major source of one-carbon groups required for the biosynthesis of purines, thymidylate, methionine, and other important biomolecules. Also exhibits THF-independent aldolase activity toward beta-hydroxyamino acids, producing glycine and aldehydes, via a retro-aldol mechanism. The polypeptide is Serine hydroxymethyltransferase (Tropheryma whipplei (strain TW08/27) (Whipple's bacillus)).